The sequence spans 431 residues: Adenylosuccinate synthetase (431 aa).

Residues Gly-13–Lys-19 and Gly-41–Thr-43 contribute to the GTP site. The active-site Proton acceptor is Asp-14. The Mg(2+) site is built by Asp-14 and Gly-41. Residues Asp-14–Lys-17, Asn-39–His-42, Thr-130, Arg-144, Gln-225, Thr-240, and Arg-304 contribute to the IMP site. His-42 acts as the Proton donor in catalysis. Ala-300 to Arg-306 provides a ligand contact to substrate. Residues Arg-306, Lys-332–Asp-334, and Ser-415–Gly-417 contribute to the GTP site.

This sequence belongs to the adenylosuccinate synthetase family. Homodimer. Mg(2+) serves as cofactor.

Its subcellular location is the cytoplasm. The enzyme catalyses IMP + L-aspartate + GTP = N(6)-(1,2-dicarboxyethyl)-AMP + GDP + phosphate + 2 H(+). It functions in the pathway purine metabolism; AMP biosynthesis via de novo pathway; AMP from IMP: step 1/2. In terms of biological role, plays an important role in the de novo pathway of purine nucleotide biosynthesis. Catalyzes the first committed step in the biosynthesis of AMP from IMP. The chain is Adenylosuccinate synthetase from Legionella pneumophila (strain Paris).